The following is a 269-amino-acid chain: GTP cyclohydrolase FolE2 (269 aa).

It belongs to the GTP cyclohydrolase IV family.

It carries out the reaction GTP + H2O = 7,8-dihydroneopterin 3'-triphosphate + formate + H(+). Its pathway is cofactor biosynthesis; 7,8-dihydroneopterin triphosphate biosynthesis; 7,8-dihydroneopterin triphosphate from GTP: step 1/1. In terms of biological role, converts GTP to 7,8-dihydroneopterin triphosphate. In Burkholderia mallei (strain NCTC 10229), this protein is GTP cyclohydrolase FolE2.